The following is a 1349-amino-acid chain: Zinc finger protein 804B (1349 aa).

A C2H2-type zinc finger spans residues Phe-55–His-79. The disordered stretch occupies residues Tyr-985–His-1010.

The chain is Zinc finger protein 804B (ZNF804B) from Homo sapiens (Human).